Consider the following 156-residue polypeptide: tRNA (cytidine(34)-2'-O)-methyltransferase (156 aa).

S-adenosyl-L-methionine-binding residues include glycine 102, leucine 124, and serine 132.

This sequence belongs to the class IV-like SAM-binding methyltransferase superfamily. RNA methyltransferase TrmH family. TrmL subfamily. In terms of assembly, homodimer.

Its subcellular location is the cytoplasm. The catalysed reaction is cytidine(34) in tRNA + S-adenosyl-L-methionine = 2'-O-methylcytidine(34) in tRNA + S-adenosyl-L-homocysteine + H(+). The enzyme catalyses 5-carboxymethylaminomethyluridine(34) in tRNA(Leu) + S-adenosyl-L-methionine = 5-carboxymethylaminomethyl-2'-O-methyluridine(34) in tRNA(Leu) + S-adenosyl-L-homocysteine + H(+). Its function is as follows. Methylates the ribose at the nucleotide 34 wobble position in the two leucyl isoacceptors tRNA(Leu)(CmAA) and tRNA(Leu)(cmnm5UmAA). Catalyzes the methyl transfer from S-adenosyl-L-methionine to the 2'-OH of the wobble nucleotide. The polypeptide is tRNA (cytidine(34)-2'-O)-methyltransferase (Burkholderia cenocepacia (strain HI2424)).